Reading from the N-terminus, the 502-residue chain is Glycerol kinase (502 aa).

ADP is bound at residue Thr-13. The ATP site is built by Thr-13, Thr-14, and Ser-15. Sn-glycerol 3-phosphate is bound at residue Thr-13. Arg-17 is an ADP binding site. 4 residues coordinate sn-glycerol 3-phosphate: Arg-83, Glu-84, Tyr-136, and Asp-246. The glycerol site is built by Arg-83, Glu-84, Tyr-136, Asp-246, and Gln-247. 2 residues coordinate ADP: Thr-268 and Gly-311. Residues Thr-268, Gly-311, Gln-315, and Gly-412 each contribute to the ATP site. ADP contacts are provided by Gly-412 and Asn-416.

The protein belongs to the FGGY kinase family.

It catalyses the reaction glycerol + ATP = sn-glycerol 3-phosphate + ADP + H(+). The protein operates within polyol metabolism; glycerol degradation via glycerol kinase pathway; sn-glycerol 3-phosphate from glycerol: step 1/1. Inhibited by fructose 1,6-bisphosphate (FBP). Key enzyme in the regulation of glycerol uptake and metabolism. Catalyzes the phosphorylation of glycerol to yield sn-glycerol 3-phosphate. In Francisella tularensis subsp. tularensis (strain WY96-3418), this protein is Glycerol kinase.